A 145-amino-acid chain; its full sequence is Aspartate 1-decarboxylase (145 aa).

Ser25 (schiff-base intermediate with substrate; via pyruvic acid) is an active-site residue. At Ser25 the chain carries Pyruvic acid (Ser). A substrate-binding site is contributed by Thr57. The active-site Proton donor is the Tyr58. Residue 73–75 (GAA) participates in substrate binding.

The protein belongs to the PanD family. In terms of assembly, heterooctamer of four alpha and four beta subunits. It depends on pyruvate as a cofactor. In terms of processing, is synthesized initially as an inactive proenzyme, which is activated by self-cleavage at a specific serine bond to produce a beta-subunit with a hydroxyl group at its C-terminus and an alpha-subunit with a pyruvoyl group at its N-terminus.

It localises to the cytoplasm. It carries out the reaction L-aspartate + H(+) = beta-alanine + CO2. Its pathway is cofactor biosynthesis; (R)-pantothenate biosynthesis; beta-alanine from L-aspartate: step 1/1. Functionally, catalyzes the pyruvoyl-dependent decarboxylation of aspartate to produce beta-alanine. The sequence is that of Aspartate 1-decarboxylase from Micrococcus luteus (strain ATCC 4698 / DSM 20030 / JCM 1464 / CCM 169 / CCUG 5858 / IAM 1056 / NBRC 3333 / NCIMB 9278 / NCTC 2665 / VKM Ac-2230) (Micrococcus lysodeikticus).